Here is a 307-residue protein sequence, read N- to C-terminus: 2-dehydropantoate 2-reductase (307 aa).

NADP(+) contacts are provided by residues 7–12 (GSGAMG), Asn-102, and Ala-128. A substrate-binding site is contributed by Asn-102. Residue Lys-184 is the Proton donor of the active site. 3 residues coordinate substrate: Asn-188, Asn-192, and Ser-255. Glu-268 lines the NADP(+) pocket.

This sequence belongs to the ketopantoate reductase family.

It is found in the cytoplasm. The enzyme catalyses (R)-pantoate + NADP(+) = 2-dehydropantoate + NADPH + H(+). It participates in cofactor biosynthesis; (R)-pantothenate biosynthesis; (R)-pantoate from 3-methyl-2-oxobutanoate: step 2/2. Functionally, catalyzes the NADPH-dependent reduction of ketopantoate into pantoic acid. The protein is 2-dehydropantoate 2-reductase (apbA) of Streptococcus pyogenes serotype M1.